Here is a 508-residue protein sequence, read N- to C-terminus: Maturase K (508 aa).

Belongs to the intron maturase 2 family. MatK subfamily.

It localises to the plastid. Its subcellular location is the chloroplast. Usually encoded in the trnK tRNA gene intron. Probably assists in splicing its own and other chloroplast group II introns. This is Maturase K from Antirrhinum majus (Garden snapdragon).